The chain runs to 503 residues: Sugar phosphate exchanger 3 (503 aa).

The chain crosses the membrane as a helical span at residues 20-40 (YTHHHLAAFLLTFFSYSLLHA). N-linked (GlcNAc...) asparagine glycans are attached at residues Asn62 and Asn71. A run of 5 helical transmembrane segments spans residues 87–107 (TLFL…GLFI), 119–139 (LVLT…GTLT), 152–172 (LVWI…VAIM), 183–203 (FVFG…AFLA), and 214–234 (AFLV…FGLV). N-linked (GlcNAc...) asparagine glycosylation is present at Asn275. A run of 6 helical transmembrane segments spans residues 300–322 (GVLL…FFWL), 342–362 (IWYD…SDLM), 367–387 (PVLT…SHSP), 395–415 (FIMS…SSAI), 437–457 (GIVD…VPLI), and 466–486 (VFYF…PLIV).

Belongs to the major facilitator superfamily. Organophosphate:Pi antiporter (OPA) (TC 2.A.1.4) family.

It localises to the endoplasmic reticulum membrane. The protein resides in the lysosome membrane. In terms of biological role, unlike the other SLC37 members, seems to lack glucose-6-phosphate antiporter activity. The sequence is that of Sugar phosphate exchanger 3 (slc37a3) from Xenopus laevis (African clawed frog).